The chain runs to 117 residues: Large ribosomal subunit protein bL20c (117 aa).

It belongs to the bacterial ribosomal protein bL20 family.

It localises to the plastid. The protein resides in the chloroplast. Its function is as follows. Binds directly to 23S ribosomal RNA and is necessary for the in vitro assembly process of the 50S ribosomal subunit. It is not involved in the protein synthesizing functions of that subunit. The chain is Large ribosomal subunit protein bL20c from Vitis vinifera (Grape).